A 413-amino-acid chain; its full sequence is Elongation factor 1-alpha (413 aa).

The tr-type G domain occupies 5–211 (KEHMNLAFIG…DDLEAPEKPV (207 aa)). Residues 14-21 (GHVDHGKS) are G1. 14-21 (GHVDHGKS) contacts GTP. Serine 21 is a Mg(2+) binding site. Residues 60 to 64 (GVTID) form a G2 region. The G3 stretch occupies residues 81-84 (DCPG). Residues 81-85 (DCPGH) and 136-139 (NKMD) each bind GTP. The G4 stretch occupies residues 136–139 (NKMD). The interval 175–177 (SAF) is G5.

The protein belongs to the TRAFAC class translation factor GTPase superfamily. Classic translation factor GTPase family. EF-Tu/EF-1A subfamily.

The protein resides in the cytoplasm. The catalysed reaction is GTP + H2O = GDP + phosphate + H(+). GTP hydrolase that promotes the GTP-dependent binding of aminoacyl-tRNA to the A-site of ribosomes during protein biosynthesis. This Methanothermobacter thermautotrophicus (strain ATCC 29096 / DSM 1053 / JCM 10044 / NBRC 100330 / Delta H) (Methanobacterium thermoautotrophicum) protein is Elongation factor 1-alpha.